The chain runs to 85 residues: UPF0386 protein Bind_1628 (85 aa).

It belongs to the UPF0386 family.

The polypeptide is UPF0386 protein Bind_1628 (Beijerinckia indica subsp. indica (strain ATCC 9039 / DSM 1715 / NCIMB 8712)).